The following is a 75-amino-acid chain: Large ribosomal subunit protein bL31 (75 aa).

This sequence belongs to the bacterial ribosomal protein bL31 family. Type A subfamily. Part of the 50S ribosomal subunit.

Its function is as follows. Binds the 23S rRNA. In Chlorobium phaeovibrioides (strain DSM 265 / 1930) (Prosthecochloris vibrioformis (strain DSM 265)), this protein is Large ribosomal subunit protein bL31.